The chain runs to 430 residues: Enolase (430 aa).

Q163 is a (2R)-2-phosphoglycerate binding site. E205 (proton donor) is an active-site residue. Mg(2+) contacts are provided by D242, E285, and D312. Positions 337, 366, 367, and 388 each coordinate (2R)-2-phosphoglycerate. K337 functions as the Proton acceptor in the catalytic mechanism.

Belongs to the enolase family. Mg(2+) is required as a cofactor.

Its subcellular location is the cytoplasm. It localises to the secreted. It is found in the cell surface. It catalyses the reaction (2R)-2-phosphoglycerate = phosphoenolpyruvate + H2O. Its pathway is carbohydrate degradation; glycolysis; pyruvate from D-glyceraldehyde 3-phosphate: step 4/5. Functionally, catalyzes the reversible conversion of 2-phosphoglycerate (2-PG) into phosphoenolpyruvate (PEP). It is essential for the degradation of carbohydrates via glycolysis. This Rhodopseudomonas palustris (strain BisB18) protein is Enolase.